A 501-amino-acid polypeptide reads, in one-letter code: Pentatricopeptide repeat-containing protein At4g16470 (501 aa).

8 PPR repeats span residues 107-141 (EPETYAVLLQECKQRKEYTKGKRIHAQMFVVGFAL), 142-172 (NEYLKVKLLILYALSGDLQTAGILFRSLKIR), 173-207 (DLIPWNAMISGYVQKGLEQEGLFIYYDMRQNRIVP), 208-242 (DQYTFASVFRACSALDRLEHGKRAHAVMIKRCIKS), 243-273 (NIIVDSALVDMYFKCSSFSDGHRVFDQLSTR), 274-308 (NVITWTSLISGYGYHGKVSEVLKCFEKMKEEGCRP), 309-344 (NPVTFLVVLTACNHGGLVDKGWEHFYSMKRDYGIEP), and 345-379 (EGQHYAAMVDTLGRAGRLQEAYEFVMKSPCKEHPP). The segment at 380-455 (VWGSLLGACR…DPGYSQIELQ (76 aa)) is type E motif. The segment at 456–486 (GEVHRFMKDDTSHRLSEKIYKKVHEMTSFFM) is type E(+) motif.

This sequence belongs to the PPR family. PCMP-E subfamily.

The protein is Pentatricopeptide repeat-containing protein At4g16470 (PCMP-E12) of Arabidopsis thaliana (Mouse-ear cress).